The chain runs to 185 residues: Peptidyl-tRNA hydrolase (185 aa).

Residue Tyr14 participates in tRNA binding. Residue His19 is the Proton acceptor of the active site. Tyr64, Asn66, and Asn112 together coordinate tRNA.

Belongs to the PTH family. As to quaternary structure, monomer.

It is found in the cytoplasm. It carries out the reaction an N-acyl-L-alpha-aminoacyl-tRNA + H2O = an N-acyl-L-amino acid + a tRNA + H(+). Functionally, hydrolyzes ribosome-free peptidyl-tRNAs (with 1 or more amino acids incorporated), which drop off the ribosome during protein synthesis, or as a result of ribosome stalling. Catalyzes the release of premature peptidyl moieties from peptidyl-tRNA molecules trapped in stalled 50S ribosomal subunits, and thus maintains levels of free tRNAs and 50S ribosomes. This chain is Peptidyl-tRNA hydrolase, found in Lactobacillus acidophilus (strain ATCC 700396 / NCK56 / N2 / NCFM).